The chain runs to 459 residues: LETM1 domain-containing protein LETM2, mitochondrial (459 aa).

Residues 1 to 25 constitute a mitochondrion transit peptide; sequence MAFYSYNSFLAIFWTRLPGHSVHPP. Residues 26–176 lie on the Mitochondrial intermembrane side of the membrane; sequence CSHFPPLAFF…LLRTCADVFR (151 aa). The disordered stretch occupies residues 88 to 114; that stretch reads GKPQPEQIPEEPKATDPQPTKDDQTEV. A compositionally biased stretch (basic and acidic residues) spans 97-111; the sequence is EEPKATDPQPTKDDQ. Residues 177 to 197 traverse the membrane as a helical segment; the sequence is LVPFVVFIIVPFMEFLIPVFL. Over 198-459 the chain is Mitochondrial matrix; it reads KLFPDMLPST…QNSKANSKGA (262 aa). In terms of domain architecture, Letm1 RBD spans 220–440; that stretch reads KMMGAKLEIA…PAPQLNGTKI (221 aa). The tract at residues 403–459 is disordered; sequence LPPSIETPKTNLGIPSSPPPESKEDITDPAPQLNGTKILQAKSQETSQNSKANSKGA. The segment covering 435–459 has biased composition (polar residues); the sequence is LNGTKILQAKSQETSQNSKANSKGA.

Testis and sperm.

The protein resides in the mitochondrion inner membrane. The protein is LETM1 domain-containing protein LETM2, mitochondrial (Letm2) of Rattus norvegicus (Rat).